A 215-amino-acid chain; its full sequence is Cytochrome b6 (215 aa).

The helical transmembrane segment at Ile-32–Phe-52 threads the bilayer. Position 35 (Cys-35) interacts with heme c. Heme b-binding residues include His-86 and His-100. The next 3 helical transmembrane spans lie at Ala-90 to Phe-110, Leu-116 to Tyr-136, and Leu-186 to Ile-206. The heme b site is built by His-187 and His-202.

This sequence belongs to the cytochrome b family. PetB subfamily. As to quaternary structure, the 4 large subunits of the cytochrome b6-f complex are cytochrome b6, subunit IV (17 kDa polypeptide, PetD), cytochrome f and the Rieske protein, while the 4 small subunits are PetG, PetL, PetM and PetN. The complex functions as a dimer. Heme b is required as a cofactor. The cofactor is heme c.

Its subcellular location is the plastid. The protein localises to the chloroplast thylakoid membrane. Component of the cytochrome b6-f complex, which mediates electron transfer between photosystem II (PSII) and photosystem I (PSI), cyclic electron flow around PSI, and state transitions. The sequence is that of Cytochrome b6 from Pinus thunbergii (Japanese black pine).